A 521-amino-acid polypeptide reads, in one-letter code: Bacillolysin (521 aa).

A signal peptide spans 1-27 (MGLGKKLSVAVAASFMSLSISLPGVQA). A propeptide spans 28–221 (AEGHQLKENQ…ILKQQNKVEH (194 aa)) (activation peptide). Aspartate 360 contacts Ca(2+). Histidine 364 serves as a coordination point for Zn(2+). Glutamate 365 is an active-site residue. The Zn(2+) site is built by histidine 368 and glutamate 388. Ca(2+) is bound by residues aspartate 399, aspartate 402, aspartate 404, and glutamate 407. Catalysis depends on histidine 449, which acts as the Proton donor.

This sequence belongs to the peptidase M4 family. It depends on Ca(2+) as a cofactor. Zn(2+) serves as cofactor.

It localises to the secreted. It carries out the reaction Similar, but not identical, to that of thermolysin.. Functionally, extracellular zinc metalloprotease. The chain is Bacillolysin (nprE) from Bacillus subtilis subsp. amylosacchariticus.